The primary structure comprises 424 residues: Double-stranded RNA-binding protein 8 (424 aa).

The segment covering 1–10 has biased composition (pro residues); that stretch reads MDMPPTPLPP. The disordered stretch occupies residues 1–22; that stretch reads MDMPPTPLPPETANTSPAPNGA. DRBM domains follow at residues 33-102 and 118-185; these read VFKS…EIVK and LCKN…AIQG. Basic and acidic residues-rich tracts occupy residues 287–308 and 318–328; these read KRVE…ENQH and DEARVEQEPSR. The disordered stretch occupies residues 287–330; that stretch reads KRVEAEPPRDIEMVQPDKENQHSDAALVQPDDEARVEQEPSRDI.

Functionally, binds double-stranded RNA. The protein is Double-stranded RNA-binding protein 8 (DRB8) of Oryza sativa subsp. japonica (Rice).